The primary structure comprises 186 residues: Ribosome-recycling factor (186 aa).

Residues 135–164 (DGMDDLKKAEKDGEIGQDESRAQSERVQKM) form a disordered region.

This sequence belongs to the RRF family.

The protein localises to the cytoplasm. In terms of biological role, responsible for the release of ribosomes from messenger RNA at the termination of protein biosynthesis. May increase the efficiency of translation by recycling ribosomes from one round of translation to another. The chain is Ribosome-recycling factor from Rhizobium meliloti (strain 1021) (Ensifer meliloti).